Consider the following 387-residue polypeptide: Phosphoglycerate kinase (387 aa).

Substrate-binding positions include 21–23 (DLN), Arg36, 59–62 (HLGR), Arg113, and Arg146. Residues Lys197, Glu314, and 340 to 343 (GGDT) contribute to the ATP site.

It belongs to the phosphoglycerate kinase family. As to quaternary structure, monomer.

It is found in the cytoplasm. It catalyses the reaction (2R)-3-phosphoglycerate + ATP = (2R)-3-phospho-glyceroyl phosphate + ADP. Its pathway is carbohydrate degradation; glycolysis; pyruvate from D-glyceraldehyde 3-phosphate: step 2/5. In Sodalis glossinidius (strain morsitans), this protein is Phosphoglycerate kinase.